A 240-amino-acid chain; its full sequence is Ubiquinone biosynthesis O-methyltransferase (240 aa).

Residues R44, G64, D85, and M129 each coordinate S-adenosyl-L-methionine.

This sequence belongs to the methyltransferase superfamily. UbiG/COQ3 family.

The enzyme catalyses a 3-demethylubiquinol + S-adenosyl-L-methionine = a ubiquinol + S-adenosyl-L-homocysteine + H(+). The catalysed reaction is a 3-(all-trans-polyprenyl)benzene-1,2-diol + S-adenosyl-L-methionine = a 2-methoxy-6-(all-trans-polyprenyl)phenol + S-adenosyl-L-homocysteine + H(+). The protein operates within cofactor biosynthesis; ubiquinone biosynthesis. Functionally, O-methyltransferase that catalyzes the 2 O-methylation steps in the ubiquinone biosynthetic pathway. The protein is Ubiquinone biosynthesis O-methyltransferase of Shigella flexneri serotype 5b (strain 8401).